A 72-amino-acid chain; its full sequence is Potassium channel toxin kappa-KTx 5.1 (72 aa).

The first 23 residues, 1 to 23 (MKLLPLLFVILIVCAILPDEASC), serve as a signal peptide directing secretion. Residues 24–43 (DQSELERKEENFKDESREIV) constitute a propeptide that is removed on maturation. Intrachain disulfides connect cysteine 47-cysteine 64 and cysteine 51-cysteine 60. The residue at position 70 (histidine 70) is a Histidine amide.

Belongs to the short scorpion toxin superfamily. Potassium channel inhibitor kappa-KTx family. Kappa-KTx 5 subfamily. Expressed by the venom gland.

It localises to the secreted. In terms of biological role, weak blocker of potassium channels Kv1.1/KCNA1 (IC(50)=578.5 nM-9.9 uM) and Kv1.6/KCNA6 (~60% block at 30 uM of toxin). Acts by binding to the pore and occluding it. Has a voltage-dependent mode of action, which can be explained by a high content of basic residues causing repulsions at higher membrane voltages. Shows a weak interaction with muscle-type nicotinic acetylcholine receptors (nAChR), since it inhibits alpha-bungarotoxin binding to muscle-type nAChR from T.californica (IC(50)=1.4 uM). This suggests it probably weakly inhibits muscle nAChR. The mode of binding to potassium channels of this toxin differs from its homologs (including HefuTx1), since it lacks the key aromatic residue of the functional dyad. In contrast, its functionally important site is composed of a number of basic residues. The sequence is that of Potassium channel toxin kappa-KTx 5.1 from Heterometrus laoticus (Thai giant scorpion).